Consider the following 116-residue polypeptide: uncharacterized protein (116 aa).

A CHY-type zinc finger spans residues 1–72 (MCKHVLNAQV…SDEYCPNCDN (72 aa)). Positions 2, 4, 16, 17, 23, 26, 27, 33, 45, 48, 67, and 70 each coordinate Zn(2+).

It is found in the cytoplasm. This is an uncharacterized protein from Schizosaccharomyces pombe (strain 972 / ATCC 24843) (Fission yeast).